A 78-amino-acid chain; its full sequence is Large ribosomal subunit protein bL28 (78 aa).

It belongs to the bacterial ribosomal protein bL28 family.

The chain is Large ribosomal subunit protein bL28 from Synechococcus sp. (strain CC9605).